We begin with the raw amino-acid sequence, 389 residues long: MEQQEEKRKIKAYQRKSKRSKSGSSSIPLDLVSEILLRLPEKSVARFRCVSKPWSSITTEPYFINLLTTRSPRLLLCFKANEKFFVSSIPQHRQTFETWNKSHSYSQLIDRYHMEFSEEMNYFPPTESVNGLICFQESARLIVWNPSTRQLLILPKPNGNSNDLTIFLGYDPVEGKHKVMCMEFSATYDTCRVLTLGSAQKLWRTVKTHNKHRSDYYDSGRCINGVVYHIAYVKDMCVWVLMSFDVRSEIFDMIELPSSDVHKDVLIDYNGRLACVGREIIEKNGIRLWILEKHNKWSSKDFLAPLVHIDKSLSTNKFLLKGFTHAGEIIYVESMFHKSAKIFFYDPVRNTSRRFELKGFTDDEFVLSNEHGYTLHVFPNHVESQISFT.

Positions 1–26 (MEQQEEKRKIKAYQRKSKRSKSGSSS) are disordered. Over residues 9-21 (KIKAYQRKSKRSK) the composition is skewed to basic residues. Residues 21 to 66 (KSGSSSIPLDLVSEILLRLPEKSVARFRCVSKPWSSITTEPYFINL) enclose the F-box domain.

This is Putative F-box protein At3g10240 from Arabidopsis thaliana (Mouse-ear cress).